Reading from the N-terminus, the 308-residue chain is tRNA dimethylallyltransferase (308 aa).

Gly-14–Thr-21 contributes to the ATP binding site. A substrate-binding site is contributed by Thr-16–Thr-21. Interaction with substrate tRNA stretches follow at residues Asp-39–Leu-42, Gln-163–Arg-167, and Arg-244–Arg-249.

This sequence belongs to the IPP transferase family. As to quaternary structure, monomer. The cofactor is Mg(2+).

The catalysed reaction is adenosine(37) in tRNA + dimethylallyl diphosphate = N(6)-dimethylallyladenosine(37) in tRNA + diphosphate. Catalyzes the transfer of a dimethylallyl group onto the adenine at position 37 in tRNAs that read codons beginning with uridine, leading to the formation of N6-(dimethylallyl)adenosine (i(6)A). This is tRNA dimethylallyltransferase from Shewanella oneidensis (strain ATCC 700550 / JCM 31522 / CIP 106686 / LMG 19005 / NCIMB 14063 / MR-1).